A 376-amino-acid polypeptide reads, in one-letter code: NIF3-like protein 1 (376 aa).

Lys-108 bears the N6-acetyllysine mark. The interval 243 to 376 (LLLHTGMGRL…ETDRDPLRVV (134 aa)) is mediates interaction with COPS2. At Thr-254 the chain carries Phosphothreonine. Ser-258 bears the Phosphoserine mark.

It belongs to the GTP cyclohydrolase I type 2/NIF3 family. In terms of assembly, homodimer. Interacts with COPS2. Interacts with THOC7.

The protein resides in the cytoplasm. The protein localises to the nucleus. May function as a transcriptional corepressor through its interaction with COPS2, negatively regulating the expression of genes involved in neuronal differentiation. This Rattus norvegicus (Rat) protein is NIF3-like protein 1.